Here is a 1107-residue protein sequence, read N- to C-terminus: Copine family protein 1 (1107 aa).

At 1–22 (MVFDARLGYDPDEWEECPEPEH) the chain is on the extracellular side. A helical membrane pass occupies residues 23 to 45 (FLVFSGFTRYMLTFAAIAFVYYF). Topologically, residues 46 to 1107 (FKLLDDKNKK…IRREMMHNPL (1062 aa)) are cytoplasmic. A coiled-coil region spans residues 67-124 (VESVLAKAGDKLHDVKEQVQQHIPESAEELMREADQYLKEQAHSVQNNVHQFAEQAAN). Over residues 478–488 (QLQQNQQQHQQ) the composition is skewed to low complexity. Disordered stretches follow at residues 478-501 (QLQQ…TADS) and 673-698 (HEPE…SRQV). Over residues 492–501 (IDRRRTTADS) the composition is skewed to basic and acidic residues. A compositionally biased stretch (polar residues) spans 687–698 (KNPSFEATSRQV). The VWFA domain occupies 863-1023 (NLIFGIDYTA…LSIIVVGVGD (161 aa)).

The protein belongs to the copine family. As to quaternary structure, may interact (via VWFA domain) with unc-89 (via Ig-like C2-type 1-3) and unc-96 (via C-terminus); cpna-1 binding sites for unc-89 and unc-96 are different. May interact with pat-6. May interact with lim-9 (via LIM domains) and with scpl-1 (via FCP1 homology domain). As to expression, expressed in body wall muscles (at protein level).

It localises to the basal cell membrane. Its subcellular location is the cytoplasm. It is found in the myofibril. The protein localises to the sarcomere. The protein resides in the m line. In terms of biological role, involved in the assembly of dense bodies and M lines during body wall muscle development. Acts by recruiting downstream of integrin-associated protein pat-6/actopaxin several dense bodies and M line components including unc-89, lim-9, scpl-1 and unc-96 to integrin-mediated attachment sites. This chain is Copine family protein 1, found in Caenorhabditis elegans.